A 399-amino-acid chain; its full sequence is Protein TWIN LOV 1 (399 aa).

The region spanning 26 to 97 (LWIKEALEEL…MEIREAIREE (72 aa)) is the PAS 1 domain. Residues 98 to 153 (RSVQVSLLNYRKSGSPFWMLFHMCPVFGKDDGKVTNFVAVQVPISGREHHRKKLRN) form the PAC 1 domain. Residues 249–320 (SLVISLGRIK…EMKECILKGQ (72 aa)) form the PAS 2 domain. Cysteine 296 is subject to S-4a-FMN cysteine. The PAC 2 domain maps to 320-376 (QSCTVQILNYSNRKDKSSFWNLLHISPVRNASGKTAYFVGVQVEASCRNTEIKELRP).

In terms of assembly, interacts with VTC2, VTC5 and BLH10. In terms of processing, FMN binds covalently to cysteine after exposure to blue light and is reversed in the dark.

The protein is Protein TWIN LOV 1 (TLP1) of Arabidopsis thaliana (Mouse-ear cress).